The following is an 80-amino-acid chain: U-actitoxin-Avd9b (80 aa).

The first 20 residues, 1-20 (MNLKVLAVFVLCAILVVVTA), serve as a signal peptide directing secretion. Residues 21 to 39 (ERRGTETGGYKKDTLQDLK) constitute a propeptide that is removed on maturation. The ShKT domain maps to 45 to 80 (CFDRYREAACTSDNIRLLCKTSAKYQINCKKSCGLC). 3 cysteine pairs are disulfide-bonded: C45–C80, C54–C73, and C63–C77. Positions 68–69 (KY) are crucial for binding to potassium channels.

It belongs to the sea anemone type 1 potassium channel toxin family. Type 1b subfamily.

It localises to the secreted. The protein resides in the nematocyst. Functionally, inhibits voltage-gated potassium channels (Kv1/KCNA). The protein is U-actitoxin-Avd9b of Anemonia viridis (Snakelocks anemone).